Consider the following 607-residue polypeptide: Chaperone protein DnaK (607 aa).

At Thr-174 the chain carries Phosphothreonine; by autocatalysis. The segment covering Ala-579 to Gly-592 has biased composition (low complexity). The interval Ala-579 to Asp-607 is disordered.

This sequence belongs to the heat shock protein 70 family.

Functionally, acts as a chaperone. This Fusobacterium nucleatum subsp. nucleatum (strain ATCC 25586 / DSM 15643 / BCRC 10681 / CIP 101130 / JCM 8532 / KCTC 2640 / LMG 13131 / VPI 4355) protein is Chaperone protein DnaK.